The primary structure comprises 264 residues: MSNILTKILARKVEEIAERLLHVSQAELVARCADLPTPRGFAAALQATIAHGDPAVIAEIKKASPSKGVLREDFRPAEIAISYELGGASCLSVLTDVHFFKGHDDYLSQARDACTLPVLRKDFTIDPYQVYEARVLGADCILLIVAALDDAQLVDLSGLALQLGMDVLVEVHDIDELERAIQISAPLIGINNRNLSTFNVSLETTLTMKGLVPRDRLLVSESGILTSADVQRLRAAGVNAFLVGEAFMRAAEPGESLREMFFIT.

It belongs to the TrpC family.

The catalysed reaction is 1-(2-carboxyphenylamino)-1-deoxy-D-ribulose 5-phosphate + H(+) = (1S,2R)-1-C-(indol-3-yl)glycerol 3-phosphate + CO2 + H2O. It functions in the pathway amino-acid biosynthesis; L-tryptophan biosynthesis; L-tryptophan from chorismate: step 4/5. The chain is Indole-3-glycerol phosphate synthase from Xylella fastidiosa (strain M23).